Reading from the N-terminus, the 212-residue chain is Thymidylate kinase (212 aa).

An ATP-binding site is contributed by 11–18 (GPEGAGKT).

It belongs to the thymidylate kinase family.

It catalyses the reaction dTMP + ATP = dTDP + ADP. Its function is as follows. Phosphorylation of dTMP to form dTDP in both de novo and salvage pathways of dTTP synthesis. The protein is Thymidylate kinase of Streptococcus pneumoniae (strain P1031).